Reading from the N-terminus, the 154-residue chain is UPF0127 protein TSIB_1463 (154 aa).

It belongs to the UPF0127 family.

The sequence is that of UPF0127 protein TSIB_1463 from Thermococcus sibiricus (strain DSM 12597 / MM 739).